A 580-amino-acid polypeptide reads, in one-letter code: D-erythrulose kinase (580 aa).

Residues 7 to 327 (DPARFTEDML…WAAPADTPAY (321 aa)) form the DhaK domain. The Tele-hemiaminal-histidine intermediate role is filled by H217. Residues 329-360 (KGAAQQHVSGERRSEATARSASSGPKLAELSD) are disordered. One can recognise a DhaL domain in the interval 368–570 (RLVARAFDAM…LALCARTVAD (203 aa)). ATP contacts are provided by residues 397–403 (DGDHGRG), 443–444 (TS), G485, R542, and 555–557 (DAG).

The enzyme catalyses D-erythrulose + ATP = D-erythrulose 4-phosphate + ADP + H(+). The protein operates within carbohydrate metabolism; erythritol degradation. It functions in the pathway carbohydrate metabolism; D-threitol degradation. Its function is as follows. Catalyzes the phosphorylation of D-erythrulose to D-erythrulose-4P. Involved in the degradation pathways of erythritol and D-threitol, that allow M.smegmatis to grow on these compounds as the sole carbon source. The protein is D-erythrulose kinase of Mycolicibacterium smegmatis (strain ATCC 700084 / mc(2)155) (Mycobacterium smegmatis).